Consider the following 48-residue polypeptide: Putative ATP synthase protein 8-like protein (48 aa).

A helical transmembrane segment spans residues 17–37; that stretch reads GFLVILLTLLLLSYAFLSMIL.

This sequence belongs to the ATPase protein 8 family.

It is found in the membrane. The sequence is that of Putative ATP synthase protein 8-like protein from Eremothecium gossypii (strain ATCC 10895 / CBS 109.51 / FGSC 9923 / NRRL Y-1056) (Yeast).